The chain runs to 383 residues: uncharacterized protein (383 aa).

This sequence belongs to the peptidase M20 family.

This is an uncharacterized protein from Staphylococcus aureus (strain N315).